Reading from the N-terminus, the 434-residue chain is FAD-dependent monooxygenase cfoG (434 aa).

Positions 1–22 (MKSSPGLHIIIVGAGITGLATA) are cleaved as a signal peptide. Glutamate 36 contributes to the FAD binding site. Active-site residues include arginine 193 and tyrosine 233. FAD is bound by residues aspartate 314 and glycine 327.

This sequence belongs to the paxM FAD-dependent monooxygenase family. As to quaternary structure, monomer. The cofactor is FAD.

The protein operates within secondary metabolite biosynthesis; flavonoid biosynthesis. In terms of biological role, monooxygenase; part of the gene cluster that mediates the biosynthesis of chlorflavonin, a fungal flavonoid with acetolactate synthase inhibitory activity. Within the pathway, cfoG is responsible for the hydroxylation of the flavonoid skeleton at position C8. The pathway begins with the PKS-NRPS hybrid synthetase cfoA that uses benzoic acid or p-hydroxybenzoic acid as a starter unit with four rounds of chain elongation using malonyl-CoA to form the chalcone skeleton. Then, a new type of chalcone isomerase, cfoK, catalyzes the conversion of the chalcone into a flavanone by a histidine-mediated oxa-Michael addition mechanism. The desaturation of flavanone to flavone is catalyzed by a new type of flavone synthase, the flavin mononucleotide (FMN)-dependent oxidoreductase cfoJ. Monooxygenases cfoF, cfoG, and P450 cfoH are responsible for the hydroxylation of the flavonoid skeleton at sites C3, C8, and C2', respectively. Like cfoF, the dehydratase cfoI plays also a role in the hydroxylation of position C3. Methyltransferases cfoB, cfoC, and cfoD then catalyze the methylation of C7-OH, C8-OH, and C3-OH, respectively. Finally, the monooxygenase cfoE is responsible for the chlorination of flavonoid at position C3'. The polypeptide is FAD-dependent monooxygenase cfoG (Aspergillus candidus).